A 414-amino-acid polypeptide reads, in one-letter code: Patatin-like protein 1 (414 aa).

One can recognise a PNPLA domain in the interval Leu-20–Met-224. A GXGXXG motif is present at residues Gly-24–Gly-29. A GXSXG motif is present at residues Gly-62 to Gly-66. The active-site Nucleophile is Ser-64. The Proton acceptor role is filled by Asp-211. Positions Asp-211 to Gly-213 match the DGA/G motif.

Belongs to the patatin family.

Functionally, possesses non-specific lipolytic acyl hydrolase (LAH) activity. Hydrolyzes phospholipids as well as galactolipids. May play a role in disease resistance. The protein is Patatin-like protein 1 (PLP1) of Oryza sativa subsp. indica (Rice).